A 170-amino-acid polypeptide reads, in one-letter code: Crossover junction endodeoxyribonuclease RuvC (170 aa).

Active-site residues include aspartate 11, glutamate 71, and aspartate 143. Residues aspartate 11, glutamate 71, and aspartate 143 each coordinate Mg(2+).

Belongs to the RuvC family. As to quaternary structure, homodimer which binds Holliday junction (HJ) DNA. The HJ becomes 2-fold symmetrical on binding to RuvC with unstacked arms; it has a different conformation from HJ DNA in complex with RuvA. In the full resolvosome a probable DNA-RuvA(4)-RuvB(12)-RuvC(2) complex forms which resolves the HJ. Mg(2+) is required as a cofactor.

It localises to the cytoplasm. The enzyme catalyses Endonucleolytic cleavage at a junction such as a reciprocal single-stranded crossover between two homologous DNA duplexes (Holliday junction).. In terms of biological role, the RuvA-RuvB-RuvC complex processes Holliday junction (HJ) DNA during genetic recombination and DNA repair. Endonuclease that resolves HJ intermediates. Cleaves cruciform DNA by making single-stranded nicks across the HJ at symmetrical positions within the homologous arms, yielding a 5'-phosphate and a 3'-hydroxyl group; requires a central core of homology in the junction. The consensus cleavage sequence is 5'-(A/T)TT(C/G)-3'. Cleavage occurs on the 3'-side of the TT dinucleotide at the point of strand exchange. HJ branch migration catalyzed by RuvA-RuvB allows RuvC to scan DNA until it finds its consensus sequence, where it cleaves and resolves the cruciform DNA. The chain is Crossover junction endodeoxyribonuclease RuvC from Agrobacterium fabrum (strain C58 / ATCC 33970) (Agrobacterium tumefaciens (strain C58)).